Consider the following 358-residue polypeptide: Putative spore germination protein YfkT (358 aa).

Transmembrane regions (helical) follow at residues 10 to 30 (LFFG…ILMI), 36 to 56 (NAWH…WLMH), 81 to 101 (IIIL…IRFF), 107 to 127 (ILFL…FVAI), 143 to 163 (IFLF…ATQI), 179 to 199 (LQSG…PLLF), 210 to 230 (IFAI…SISV), 262 to 282 (IIAA…LYIV), 297 to 317 (AMYT…FLNT), and 326 to 346 (IKPI…YLII).

The protein belongs to the amino acid-polyamine-organocation (APC) superfamily. Spore germination protein (SGP) (TC 2.A.3.9) family.

It is found in the cell membrane. In terms of biological role, may be involved in spore germination. The protein is Putative spore germination protein YfkT (yfkT) of Bacillus subtilis (strain 168).